We begin with the raw amino-acid sequence, 228 residues long: Phosphoglycolate phosphatase (228 aa).

Asp9 functions as the Nucleophile in the catalytic mechanism. Positions 9 and 11 each coordinate Mg(2+). Position 151 (Lys151) interacts with substrate. Mg(2+) contacts are provided by Asp174 and Asp178.

Belongs to the archaeal SPP-like hydrolase family. Mg(2+) serves as cofactor.

It carries out the reaction 2-phosphoglycolate + H2O = glycolate + phosphate. In terms of biological role, catalyzes the dephosphorylation of 2-phosphoglycolate. This is Phosphoglycolate phosphatase from Pyrobaculum neutrophilum (strain DSM 2338 / JCM 9278 / NBRC 100436 / V24Sta) (Thermoproteus neutrophilus).